We begin with the raw amino-acid sequence, 415 residues long: Gamma-glutamyl phosphate reductase (415 aa).

The protein belongs to the gamma-glutamyl phosphate reductase family.

Its subcellular location is the cytoplasm. It carries out the reaction L-glutamate 5-semialdehyde + phosphate + NADP(+) = L-glutamyl 5-phosphate + NADPH + H(+). Its pathway is amino-acid biosynthesis; L-proline biosynthesis; L-glutamate 5-semialdehyde from L-glutamate: step 2/2. Functionally, catalyzes the NADPH-dependent reduction of L-glutamate 5-phosphate into L-glutamate 5-semialdehyde and phosphate. The product spontaneously undergoes cyclization to form 1-pyrroline-5-carboxylate. This chain is Gamma-glutamyl phosphate reductase, found in Leuconostoc citreum (strain KM20).